The sequence spans 348 residues: Fe-S cluster assembly protein DRE2 (348 aa).

The tract at residues 1 to 185 (MSGEKSSLLL…KKPESPRASV (185 aa)) is N-terminal SAM-like domain. 2 disordered regions span residues 128-148 (QTAPVALRPKRNTPSGGSKSL) and 162-213 (KKAE…TASK). The interval 186–241 (VAEDLDDGDELDGMNEDDSNSDELTASKSKFFDDVAGQDSADSIDEDDLVDDAEKS) is linker. Residues 188–206 (EDLDDGDELDGMNEDDSNS) are compositionally biased toward acidic residues. 4 residues coordinate [2Fe-2S] cluster: C248, C259, C262, and C264. Residues 248-264 (CGKTKTRRRKACKDCTC) form a fe-S binding site A region. Residues C311, C314, C322, and C325 each contribute to the [4Fe-4S] cluster site. 2 short sequence motifs (cx2C motif) span residues 311–314 (CGSC) and 322–325 (CSGC). The segment at 311–325 (CGSCSLGDAFRCSGC) is fe-S binding site B.

This sequence belongs to the anamorsin family. Monomer. Interacts with TAH18. Interacts with MIA40. Requires [2Fe-2S] cluster as cofactor. The cofactor is [4Fe-4S] cluster.

It is found in the cytoplasm. Its subcellular location is the mitochondrion intermembrane space. Functionally, component of the cytosolic iron-sulfur (Fe-S) protein assembly (CIA) machinery required for the maturation of extramitochondrial Fe-S proteins. Part of an electron transfer chain functioning in an early step of cytosolic Fe-S biogenesis, facilitating the de novo assembly of a [4Fe-4S] cluster on the scaffold complex CFD1-NBP35. Electrons are transferred to DRE2 from NADPH via the FAD- and FMN-containing protein TAH18. TAH18-DRE2 are also required for the assembly of the diferric tyrosyl radical cofactor of ribonucleotide reductase (RNR), probably by providing electrons for reduction during radical cofactor maturation in the catalytic small subunit RNR2. The sequence is that of Fe-S cluster assembly protein DRE2 from Lachancea thermotolerans (strain ATCC 56472 / CBS 6340 / NRRL Y-8284) (Yeast).